Here is a 436-residue protein sequence, read N- to C-terminus: Eukaryotic peptide chain release factor subunit 1-1 (436 aa).

This sequence belongs to the eukaryotic release factor 1 family. As to quaternary structure, heterodimer of two subunits, one of which binds GTP.

The protein localises to the cytoplasm. Functionally, directs the termination of nascent peptide synthesis (translation) in response to the termination codons UAA, UAG and UGA. Modulates plant growth and development. This chain is Eukaryotic peptide chain release factor subunit 1-1 (ERF1-1), found in Arabidopsis thaliana (Mouse-ear cress).